The following is a 572-amino-acid chain: Putative carbohydrate transport ATP-binding protein MPN_258 (572 aa).

ABC transporter domains are found at residues Phe-6–Glu-253 and Arg-327–Gln-572. Gly-40–Ser-47 contacts ATP.

The protein belongs to the ABC transporter superfamily.

Its subcellular location is the cell membrane. Part of the ABC transporter complex involved in carbohydrates import. Probably responsible for energy coupling to the transport system. The sequence is that of Putative carbohydrate transport ATP-binding protein MPN_258 from Mycoplasma pneumoniae (strain ATCC 29342 / M129 / Subtype 1) (Mycoplasmoides pneumoniae).